Consider the following 424-residue polypeptide: Riboflavin biosynthesis protein RibBA (424 aa).

The segment at 1–206 (MVTCEAGIAS…VDDLITYRWT (206 aa)) is DHBP synthase. D-ribulose 5-phosphate-binding positions include 32-33 (RE), Asp37, 145-149 (RPGHT), and Glu169. Residue Glu33 coordinates Mg(2+). His148 contributes to the Mg(2+) binding site. Residues 207–424 (FDSLVEHVSS…YETVERTSCC (218 aa)) are GTP cyclohydrolase II. 257-261 (RVHSE) provides a ligand contact to GTP. Zn(2+) contacts are provided by Cys262, Cys273, and Cys275. Residues Gln278, 301–303 (EGR), and Thr323 each bind GTP. Asp335 serves as the catalytic Proton acceptor; for GTP cyclohydrolase activity. Arg337 functions as the Nucleophile; for GTP cyclohydrolase activity in the catalytic mechanism. 2 residues coordinate GTP: Thr358 and Lys363.

It in the N-terminal section; belongs to the DHBP synthase family. In the C-terminal section; belongs to the GTP cyclohydrolase II family. Mg(2+) is required as a cofactor. It depends on Mn(2+) as a cofactor. Requires Zn(2+) as cofactor.

It catalyses the reaction D-ribulose 5-phosphate = (2S)-2-hydroxy-3-oxobutyl phosphate + formate + H(+). It carries out the reaction GTP + 4 H2O = 2,5-diamino-6-hydroxy-4-(5-phosphoribosylamino)-pyrimidine + formate + 2 phosphate + 3 H(+). The protein operates within cofactor biosynthesis; riboflavin biosynthesis; 2-hydroxy-3-oxobutyl phosphate from D-ribulose 5-phosphate: step 1/1. It participates in cofactor biosynthesis; riboflavin biosynthesis; 5-amino-6-(D-ribitylamino)uracil from GTP: step 1/4. In terms of biological role, catalyzes the conversion of D-ribulose 5-phosphate to formate and 3,4-dihydroxy-2-butanone 4-phosphate. Catalyzes the conversion of GTP to 2,5-diamino-6-ribosylamino-4(3H)-pyrimidinone 5'-phosphate (DARP), formate and pyrophosphate. In Chlamydia muridarum (strain MoPn / Nigg), this protein is Riboflavin biosynthesis protein RibBA.